Reading from the N-terminus, the 1466-residue chain is MFFLTKILPLRGRIFPMFGCLLLIVSLITGCIASPAAEVAETVFDSKPVDFMTFKDSTNTLFLNAEFGDVYLSQDNGQSWRNGVISGQVCPIKKLIKHSFENSRVFALTECDTVYYSYDNGENWDYFTIDHPISITQLPFHFHAKNPDYVIFNNQYCSSSGTWVGKICKPDLYYTKDGFQSDPEPMPVGSSYCIFADSSEKMVVSSEEQIICISLNPNSAARPPFSHHIVYSDDWFQSIVPVQLHNFLGSDGAYGILSTGSFLVAALIDAATRKLFVYVSQDGYYWEEALKFHKGFEFDAFTILPSTEYSFFIDSLDSHPNNPTGILYSLDSESNTFVIRQMNTNRYVDGYTDFMLIDYLDGLQFVNVVENVDEIEVDPQVDKVLSSRITFDGGKTWSTVASPESSCNSMKQCSLHLFLDPHVSHASIASSKFAPGILLASGSVGDRLLSENQMDLFVSEDGGRNWTLSRDGMHLFAMSGFGSIFFASEYLDVINEVYYSLDHGQSWVTVTLDKTIVPIKLFASEDPYAEIFYLLAMTDDGEQSNYSLFSFNFGKFLPKECQFSNSESNKNDFEKWYTRYANGSPICSEMGKKEFFWRKKATSVCSVPKSITDLHGSFDACECTDEDYECNTQFISNDQGECKLLDFIGSLLCASEDLDTFQKIPYRLVPGNKCTPNKRDSHREPQTFNCDSFNEPGTEITSFLYDFDEKIVDVVYLEGTVPEENTFLIGISVNSHVYFSEDEGKTWDKFSKEEFSSVLPHAYNKNSVYMVTSKNIVYFTTNRGKNFYKFKAPSPPNQNGKSLFSFHPSRPAWLLYAGSENCEKNPFADDCRDVVFVSLDFGDTWSRLPSNLEYCSWAKAEKLVVDDTLIFCIRQNTNDPFKKELISSIDFFEYEQDEILNDVVGFMIEDEYVIVAVQDEEGTSLSLDVSINGLNFASCSFPAYLNVHPKQAYTILDSQTHSLFIHVTTNTHLGSEWGDILKSNSNGTYFMTSLANVNRDSVGYVDFERLEGIQGIALANIVSNTKELTDGGTKKLQTLITFNDGLDWSYLNLVGGEKIVPKCGKNCYLHLHGYTERNQFSDPTSTNAAVGLIIGVGSFSPFLIPYEESQTFISRDAGVTWYRIFDSPHLWAFLDSGSIIIAVESISPTNVIKYSADEGRTWQEYQFSEKSKVVVDVSTKPSGVGHQVLLLTTDDENAPISSVLIDFDALYRRTCVFDEENSEESDFVRWVPTDISGKPLCLRGRISSFYRKSIHKKCRVGSSLLVKEEVLSKCECTRADFECDYNYRRLKDGTCVLVSGLQPPDTREEQCSVDDAFEWRQPTGYKRTPLTECEGGVPLDAGTLHPCPGKEDDYYKAHPKPGGWSIFLTIIFSILLAAVAGCILYYYSRRFLKGAIRLGSDSATENPLESGISYTRGAFSSIPIFFSALYQSVRSLFIRSTPTNGEFENAAFLQNYEIDDDDEESV.

The N-terminal stretch at 1-33 (MFFLTKILPLRGRIFPMFGCLLLIVSLITGCIA) is a signal peptide. Residues 34–1363 (SPAAEVAETV…YYKAHPKPGG (1330 aa)) lie on the Lumenal side of the membrane. BNR repeat units lie at residues 71-82 (YLSQDNGQSWRN), 115-126 (YYSYDNGENWDY), 388-399 (RITFDGGKTWST), 457-468 (FVSEDGGRNWTL), and 498-509 (YYSLDHGQSWVT). The N-linked (GlcNAc...) asparagine glycan is linked to N465. Residue N545 is glycosylated (N-linked (GlcNAc...) asparagine). BNR repeat units lie at residues 738-749 (YFSEDEGKTWDK), 778-789 (YFTTNRGKNFYK), and 836-847 (FVSLDFGDTWSR). N986 carries an N-linked (GlcNAc...) asparagine glycan. BNR repeat units lie at residues 1039-1050 (LITFNDGLDWSY), 1112-1123 (FISRDAGVTWYR), and 1153-1164 (KYSADEGRTWQE). A helical membrane pass occupies residues 1364–1384 (WSIFLTIIFSILLAAVAGCIL). At 1385-1466 (YYYSRRFLKG…EIDDDDEESV (82 aa)) the chain is on the cytoplasmic side.

It belongs to the VPS10-related sortilin family.

The protein resides in the golgi apparatus. The protein localises to the trans-Golgi network membrane. Its subcellular location is the prevacuolar compartment membrane. Its function is as follows. Functions as a sorting receptor in the Golgi compartment required for the intracellular sorting and delivery of soluble vacuolar proteins, like carboxypeptidase Y (CPY) and proteinase A. Executes multiple rounds of sorting by cycling between the late Golgi and a prevacuolar endosome-like compartment. This Schizosaccharomyces pombe (strain 972 / ATCC 24843) (Fission yeast) protein is Vacuolar protein sorting/targeting protein 10 (vps10).